Reading from the N-terminus, the 406-residue chain is Leu/Ile/Val-binding protein homolog 5 (406 aa).

An N-terminal signal peptide occupies residues 1–29 (MIGTRLPAWTRVLACGVAGLSLMTISAKA).

Belongs to the leucine-binding protein family.

Component of an amino-acid transport system. The polypeptide is Leu/Ile/Val-binding protein homolog 5 (Brucella suis biovar 1 (strain 1330)).